Consider the following 124-residue polypeptide: V-type proton ATPase subunit F (124 aa).

It belongs to the V-ATPase F subunit family. As to quaternary structure, V-ATPase is a heteromultimeric enzyme composed of a peripheral catalytic V1 complex (components A to H) attached to an integral membrane V0 proton pore complex (components: a, c, c', c'', d, e, f and VOA1).

It is found in the vacuole membrane. Functionally, subunit of the V1 complex of vacuolar(H+)-ATPase (V-ATPase), a multisubunit enzyme composed of a peripheral complex (V1) that hydrolyzes ATP and a membrane integral complex (V0) that translocates protons. V-ATPase is responsible for acidifying and maintaining the pH of intracellular compartments. In Neurospora crassa (strain ATCC 24698 / 74-OR23-1A / CBS 708.71 / DSM 1257 / FGSC 987), this protein is V-type proton ATPase subunit F (vma-7).